The chain runs to 531 residues: Probable rhamnogalacturonate lyase A (531 aa).

Residues 1–20 form the signal peptide; it reads MLSKTSLLSLLSLAAGVVNA. 2 disulfide bridges follow: C50–C93 and C184–C193.

This sequence belongs to the polysaccharide lyase 4 family.

The protein resides in the secreted. It carries out the reaction Endotype eliminative cleavage of L-alpha-rhamnopyranosyl-(1-&gt;4)-alpha-D-galactopyranosyluronic acid bonds of rhamnogalacturonan I domains in ramified hairy regions of pectin leaving L-rhamnopyranose at the reducing end and 4-deoxy-4,5-unsaturated D-galactopyranosyluronic acid at the non-reducing end.. Pectinolytic enzymes consist of four classes of enzymes: pectin lyase, polygalacturonase, pectin methylesterase and rhamnogalacturonase. Degrades the rhamnogalacturonan I (RG-I) backbone of pectin. The sequence is that of Probable rhamnogalacturonate lyase A (rglA) from Aspergillus niger (strain ATCC MYA-4892 / CBS 513.88 / FGSC A1513).